Here is a 315-residue protein sequence, read N- to C-terminus: Ribosomal RNA small subunit methyltransferase H (315 aa).

Residues 37 to 39 (GGH), D57, F83, D105, and Q112 each bind S-adenosyl-L-methionine.

This sequence belongs to the methyltransferase superfamily. RsmH family.

It is found in the cytoplasm. The enzyme catalyses cytidine(1402) in 16S rRNA + S-adenosyl-L-methionine = N(4)-methylcytidine(1402) in 16S rRNA + S-adenosyl-L-homocysteine + H(+). In terms of biological role, specifically methylates the N4 position of cytidine in position 1402 (C1402) of 16S rRNA. The chain is Ribosomal RNA small subunit methyltransferase H from Pseudomonas putida (strain ATCC 700007 / DSM 6899 / JCM 31910 / BCRC 17059 / LMG 24140 / F1).